Reading from the N-terminus, the 696-residue chain is Serine/threonine-protein kinase sck1 (696 aa).

2 disordered regions span residues 1 to 59 (MTEI…YDPV) and 77 to 118 (HKEQ…TPPS). Over residues 11-37 (SSNSENTNQASPSTIQSHSTQPVLSND) the composition is skewed to polar residues. Basic and acidic residues-rich tracts occupy residues 38 to 49 (HSTKVNDYEGKE) and 77 to 88 (HKEQSLKEDKES). Positions 122-272 (IRHDTVVPKD…VQEAWYKLEP (151 aa)) constitute a C2 domain. The Protein kinase domain occupies 302 to 563 (FTALRLIGKG…TTELKEHPFF (262 aa)). Residues 308–316 (IGKGTFGQV) and lysine 331 contribute to the ATP site. Aspartate 428 acts as the Proton acceptor in catalysis. Positions 564-643 (ADINWDLLSK…VNKSIDEQFQ (80 aa)) constitute an AGC-kinase C-terminal domain. Threonine 632 carries the post-translational modification Phosphothreonine. Serine 665 is subject to Phosphoserine.

Belongs to the protein kinase superfamily. AGC Ser/Thr protein kinase family. cAMP subfamily.

The enzyme catalyses L-seryl-[protein] + ATP = O-phospho-L-seryl-[protein] + ADP + H(+). It catalyses the reaction L-threonyl-[protein] + ATP = O-phospho-L-threonyl-[protein] + ADP + H(+). Its function is as follows. Protein kinase that is part of growth control pathway which is at least partially redundant with the cAMP pathway. Required for trehalase activation. The protein is Serine/threonine-protein kinase sck1 (sck1) of Schizosaccharomyces pombe (strain 972 / ATCC 24843) (Fission yeast).